Consider the following 350-residue polypeptide: Protein memo-1 homolog (350 aa).

This sequence belongs to the MEMO1 family. Interacts with rho-1. As to expression, expressed in neuronal and non-neuronal cells in the head and tail, pharyngeal cells, spermatheca, distal tip cells, anchor cell and the intestine.

Plays a role in the oxidative stress response and the maintenance of longevity by regulating the interaction between GTPase rho-1 and oxidase bli-3. In turn, this serves to modulate bli-3 activity and the control of reactive oxygen species production. May control cell migration by relaying extracellular chemotactic signals to the microtubule cytoskeleton. This is Protein memo-1 homolog from Caenorhabditis elegans.